Reading from the N-terminus, the 339-residue chain is Heat-inducible transcription repressor HrcA (339 aa).

This sequence belongs to the HrcA family.

Functionally, negative regulator of class I heat shock genes (grpE-dnaK-dnaJ and groELS operons). Prevents heat-shock induction of these operons. In Frankia casuarinae (strain DSM 45818 / CECT 9043 / HFP020203 / CcI3), this protein is Heat-inducible transcription repressor HrcA.